Here is a 1829-residue protein sequence, read N- to C-terminus: Iron-regulated protein FrpC (1829 aa).

22 Hemolysin-type calcium-binding repeats span residues 869–886, 887–904, 1015–1032, 1033–1050, 1051–1068, 1069–1086, 1087–1104, 1215–1232, 1233–1250, 1251–1268, 1269–1286, 1287–1304, 1415–1432, 1433–1450, 1451–1468, 1469–1486, 1487–1504, 1615–1632, 1633–1650, 1651–1668, 1669–1686, and 1687–1704; these read FGHN…NDTL, IGGA…SDTY, NGGL…DDLL, NGDA…NDTL, NGGE…NDAL, NGGE…NDTL, DGGE…NDAL, and NGGE…NDVL.

The protein belongs to the RTX prokaryotic toxin (TC 1.C.11) family.

The protein resides in the cell outer membrane. Its subcellular location is the secreted. May participate in the pathogenesis of meningococcal disease. This is Iron-regulated protein FrpC (frpC) from Neisseria meningitidis serogroup C.